The primary structure comprises 61 residues: Small ribosomal subunit protein uS14 (61 aa).

The Zn(2+) site is built by C24, C27, C40, and C43.

Belongs to the universal ribosomal protein uS14 family. Zinc-binding uS14 subfamily. In terms of assembly, part of the 30S ribosomal subunit. Contacts proteins S3 and S10. The cofactor is Zn(2+).

Binds 16S rRNA, required for the assembly of 30S particles and may also be responsible for determining the conformation of the 16S rRNA at the A site. This chain is Small ribosomal subunit protein uS14, found in Acidothermus cellulolyticus (strain ATCC 43068 / DSM 8971 / 11B).